Here is a 92-residue protein sequence, read N- to C-terminus: Large ribosomal subunit protein bL25 (92 aa).

The protein belongs to the bacterial ribosomal protein bL25 family. In terms of assembly, part of the 50S ribosomal subunit; part of the 5S rRNA/L5/L18/L25 subcomplex. Contacts the 5S rRNA. Binds to the 5S rRNA independently of L5 and L18.

In terms of biological role, this is one of the proteins that binds to the 5S RNA in the ribosome where it forms part of the central protuberance. The chain is Large ribosomal subunit protein bL25 from Photobacterium damsela subsp. piscicida (Pasteurella piscicida).